A 174-amino-acid chain; its full sequence is Probable adenylyl-sulfate kinase (174 aa).

10–17 (GPSGAGKT) lines the ATP pocket. The active-site Phosphoserine intermediate is the Ser-84.

It belongs to the APS kinase family.

It catalyses the reaction adenosine 5'-phosphosulfate + ATP = 3'-phosphoadenylyl sulfate + ADP + H(+). The protein operates within sulfur metabolism; hydrogen sulfide biosynthesis; sulfite from sulfate: step 2/3. Functionally, catalyzes the synthesis of activated sulfate. This chain is Probable adenylyl-sulfate kinase (cysC), found in Pyrococcus abyssi (strain GE5 / Orsay).